Consider the following 679-residue polypeptide: Methionine--tRNA ligase (679 aa).

A 'HIGH' region motif is present at residues 12 to 22 (PYANGAIHLGH). Residues cysteine 143, cysteine 146, cysteine 156, and cysteine 159 each contribute to the Zn(2+) site. Residues 328–332 (KMSKS) carry the 'KMSKS' region motif. An ATP-binding site is contributed by lysine 331. The tRNA-binding domain maps to 577–679 (DFAKLDLRVA…EGIRPGMQVK (103 aa)).

It belongs to the class-I aminoacyl-tRNA synthetase family. MetG type 1 subfamily. In terms of assembly, homodimer. Zn(2+) serves as cofactor.

The protein resides in the cytoplasm. It catalyses the reaction tRNA(Met) + L-methionine + ATP = L-methionyl-tRNA(Met) + AMP + diphosphate. Its function is as follows. Is required not only for elongation of protein synthesis but also for the initiation of all mRNA translation through initiator tRNA(fMet) aminoacylation. This chain is Methionine--tRNA ligase, found in Actinobacillus pleuropneumoniae serotype 5b (strain L20).